A 181-amino-acid chain; its full sequence is Shikimate kinase 2 (181 aa).

ATP is bound at residue 12–17; that stretch reads GCGKTT. Mg(2+)-binding residues include T16 and D32. Substrate-binding residues include D34, R58, and G79. Positions 112-126 are LID domain; that stretch reads EAEPEAELRPTLTGK. ATP is bound at residue R120. R139 is a binding site for substrate.

It belongs to the shikimate kinase family. AroL subfamily. In terms of assembly, monomer. The cofactor is Mg(2+).

The protein resides in the cytoplasm. It catalyses the reaction shikimate + ATP = 3-phosphoshikimate + ADP + H(+). It functions in the pathway metabolic intermediate biosynthesis; chorismate biosynthesis; chorismate from D-erythrose 4-phosphate and phosphoenolpyruvate: step 5/7. Its function is as follows. Catalyzes the specific phosphorylation of the 3-hydroxyl group of shikimic acid using ATP as a cosubstrate. This chain is Shikimate kinase 2, found in Salmonella schwarzengrund (strain CVM19633).